A 226-amino-acid polypeptide reads, in one-letter code: LysM and putative peptidoglycan-binding domain-containing protein 1 (226 aa).

2 positions are modified to phosphoserine: Ser23 and Ser33. Positions 40 to 84 (LEHQLEPGDTLAGLALKYGVTMEQIKRTNRLYTNDSIFLKKTLYI) constitute a LysM domain. Residues 95-156 (NGLDSEEEND…PSHDLSASDF (62 aa)) are disordered. Residues 98 to 107 (DSEEENDGEE) are compositionally biased toward acidic residues. Ser99 is modified (phosphoserine). The segment covering 142 to 151 (QETSTPSHDL) has biased composition (polar residues). Phosphoserine occurs at positions 165, 180, 193, and 211. The segment at 170-226 (AAAQKLRKGESGVPEEDTGLYPSSPRMQQRAVLGPVPLTRTSRTQTLRDQEDEIFKL) is disordered. Residues 215–226 (TLRDQEDEIFKL) are compositionally biased toward basic and acidic residues.

In Mus musculus (Mouse), this protein is LysM and putative peptidoglycan-binding domain-containing protein 1 (Lysmd1).